Consider the following 482-residue polypeptide: Glutamate-rich WD repeat-containing protein 1 (482 aa).

2 disordered regions span residues 1-75 and 148-180; these read MSSK…WRAG and QLHK…EDKD. Composition is skewed to acidic residues over residues 27 to 63 and 157 to 180; these read NGED…DNDG and EDSD…EDKD. WD repeat units lie at residues 191 to 231, 294 to 334, 337 to 377, 383 to 423, and 446 to 482; these read NHNG…KALD, GHTE…PAIT, AHTA…DNSP, YHTG…DTEE, and QGQH…NSEE.

The protein resides in the nucleus. Its subcellular location is the nucleolus. The chain is Glutamate-rich WD repeat-containing protein 1 (grwd1) from Dictyostelium discoideum (Social amoeba).